The primary structure comprises 72 residues: Translation initiation factor IF-1 (72 aa).

The 72-residue stretch at 1–72 (MARDDVIEVD…DKGRITFRYK (72 aa)) folds into the S1-like domain.

Belongs to the IF-1 family. As to quaternary structure, component of the 30S ribosomal translation pre-initiation complex which assembles on the 30S ribosome in the order IF-2 and IF-3, IF-1 and N-formylmethionyl-tRNA(fMet); mRNA recruitment can occur at any time during PIC assembly.

It is found in the cytoplasm. In terms of biological role, one of the essential components for the initiation of protein synthesis. Stabilizes the binding of IF-2 and IF-3 on the 30S subunit to which N-formylmethionyl-tRNA(fMet) subsequently binds. Helps modulate mRNA selection, yielding the 30S pre-initiation complex (PIC). Upon addition of the 50S ribosomal subunit IF-1, IF-2 and IF-3 are released leaving the mature 70S translation initiation complex. This Helicobacter pylori (strain HPAG1) protein is Translation initiation factor IF-1.